The primary structure comprises 282 residues: D-alanine aminotransferase (282 aa).

Tyr32 serves as a coordination point for substrate. Arg51 provides a ligand contact to pyridoxal 5'-phosphate. 2 residues coordinate substrate: Arg99 and His101. The Proton acceptor role is filled by Lys146. N6-(pyridoxal phosphate)lysine is present on Lys146. Glu178 lines the pyridoxal 5'-phosphate pocket.

It belongs to the class-IV pyridoxal-phosphate-dependent aminotransferase family. In terms of assembly, homodimer. Pyridoxal 5'-phosphate is required as a cofactor.

The enzyme catalyses D-alanine + 2-oxoglutarate = D-glutamate + pyruvate. Functionally, acts on the D-isomers of alanine, leucine, aspartate, glutamate, aminobutyrate, norvaline and asparagine. The enzyme transfers an amino group from a substrate D-amino acid to the pyridoxal phosphate cofactor to form pyridoxamine and an alpha-keto acid in the first half-reaction. The second half-reaction is the reverse of the first, transferring the amino group from the pyridoxamine to a second alpha-keto acid to form the product D-amino acid via a ping-pong mechanism. This is an important process in the formation of D-alanine and D-glutamate, which are essential bacterial cell wall components. In Staphylococcus aureus (strain MW2), this protein is D-alanine aminotransferase (dat).